Here is a 218-residue protein sequence, read N- to C-terminus: Small ribosomal subunit protein mS34 (218 aa).

The protein belongs to the mitochondrion-specific ribosomal protein mS34 family. As to quaternary structure, component of the mitochondrial ribosome small subunit (28S) which comprises a 12S rRNA and about 30 distinct proteins. Widely expressed (at protein liver).

It localises to the mitochondrion. In terms of biological role, required for mitochondrial translation, plays a role in maintaining the stability of the small ribosomal subunit and the 12S rRNA that are required for mitoribosome formation. This chain is Small ribosomal subunit protein mS34 (Mrps34), found in Mus musculus (Mouse).